The chain runs to 200 residues: Recombination protein RecR (200 aa).

A C4-type zinc finger spans residues cysteine 57 to cysteine 72. The 96-residue stretch at threonine 80–proline 175 folds into the Toprim domain.

It belongs to the RecR family.

May play a role in DNA repair. It seems to be involved in an RecBC-independent recombinational process of DNA repair. It may act with RecF and RecO. This chain is Recombination protein RecR, found in Pseudomonas putida (strain GB-1).